The primary structure comprises 412 residues: Serine hydroxymethyltransferase (412 aa).

(6S)-5,6,7,8-tetrahydrofolate contacts are provided by residues L117 and 121 to 123 (GHL). Residue K226 is modified to N6-(pyridoxal phosphate)lysine.

It belongs to the SHMT family. In terms of assembly, homodimer. Pyridoxal 5'-phosphate serves as cofactor.

It is found in the cytoplasm. The catalysed reaction is (6R)-5,10-methylene-5,6,7,8-tetrahydrofolate + glycine + H2O = (6S)-5,6,7,8-tetrahydrofolate + L-serine. The protein operates within one-carbon metabolism; tetrahydrofolate interconversion. It functions in the pathway amino-acid biosynthesis; glycine biosynthesis; glycine from L-serine: step 1/1. In terms of biological role, catalyzes the reversible interconversion of serine and glycine with tetrahydrofolate (THF) serving as the one-carbon carrier. This reaction serves as the major source of one-carbon groups required for the biosynthesis of purines, thymidylate, methionine, and other important biomolecules. Also exhibits THF-independent aldolase activity toward beta-hydroxyamino acids, producing glycine and aldehydes, via a retro-aldol mechanism. In Symbiobacterium thermophilum (strain DSM 24528 / JCM 14929 / IAM 14863 / T), this protein is Serine hydroxymethyltransferase.